Here is a 488-residue protein sequence, read N- to C-terminus: MNLEETMPLVFERSIPGRIGFSLPESDVPETKASDFFEEAYLRSTPADLPELSELEIMRHYTNLSNHNFGVDSGFYPLGSCTMKYNPKINEKVARFPGFANIHPNQPESSVQGALELLYDLQTSLVEITGMDEVTLQPAAGAHGEWTGLMLIRAFHEKNGDTKRTKVIIPDSAHGTNPASAAVAGFDVVTVKSNEKGLVDVADLKKVVGEDTAALMLTNPNTLGLFEKDIVEMAEIVHAAGGKLYYDGANLNAIMAKVRPGDMGFDVVHLNLHKTFTGPHGGGGPGSGPIGVKKELIPFLPTPVLTKKEDAYTFDYNYPDSIGRVKPYYGNFGINVRAYTYIRTMGPDGLKLVTEYAVLNANYMMRKLQAAYDLPFDQVCKHEFVLSGNRQKKLGVRTIDIAKRLLDHNFHPPTVYFPLIVGEAIMIEPTETESKETLDSFIDTMLKIAKEAEENPEIVQEAPHSTYVKRLDETRAARKPVLRYQKEV.

Lys-274 carries the N6-(pyridoxal phosphate)lysine modification.

Belongs to the GcvP family. C-terminal subunit subfamily. In terms of assembly, the glycine cleavage system is composed of four proteins: P, T, L and H. In this organism, the P 'protein' is a heterodimer of two subunits. Pyridoxal 5'-phosphate serves as cofactor.

The catalysed reaction is N(6)-[(R)-lipoyl]-L-lysyl-[glycine-cleavage complex H protein] + glycine + H(+) = N(6)-[(R)-S(8)-aminomethyldihydrolipoyl]-L-lysyl-[glycine-cleavage complex H protein] + CO2. In terms of biological role, the glycine cleavage system catalyzes the degradation of glycine. The P protein binds the alpha-amino group of glycine through its pyridoxal phosphate cofactor; CO(2) is released and the remaining methylamine moiety is then transferred to the lipoamide cofactor of the H protein. The chain is Probable glycine dehydrogenase (decarboxylating) subunit 2 from Listeria welshimeri serovar 6b (strain ATCC 35897 / DSM 20650 / CCUG 15529 / CIP 8149 / NCTC 11857 / SLCC 5334 / V8).